A 339-amino-acid chain; its full sequence is Fructose-1,6-bisphosphatase class 1 (339 aa).

4 residues coordinate Mg(2+): glutamate 92, aspartate 114, leucine 116, and aspartate 117. Substrate contacts are provided by residues 117 to 120 (DGSS), asparagine 213, and lysine 279. Glutamate 285 serves as a coordination point for Mg(2+).

Belongs to the FBPase class 1 family. As to quaternary structure, homotetramer. It depends on Mg(2+) as a cofactor.

It is found in the cytoplasm. The catalysed reaction is beta-D-fructose 1,6-bisphosphate + H2O = beta-D-fructose 6-phosphate + phosphate. Its pathway is carbohydrate biosynthesis; gluconeogenesis. In Acidovorax sp. (strain JS42), this protein is Fructose-1,6-bisphosphatase class 1.